We begin with the raw amino-acid sequence, 534 residues long: Alkaline serine exoprotease A (534 aa).

The signal sequence occupies residues 1–21; the sequence is MLKKLLSCCITSALCFHSSLA. The propeptide occupies 22-141; it reads FSQPNEIADS…LSLDPIVSAD (120 aa). An Inhibitor I9 domain is found at 57–134; that stretch reads RYIVVFQQPQ…YIEQDRILSL (78 aa). In terms of domain architecture, Peptidase S8 spans 148–419; that stretch reads IWGLDRIDQR…KLLYSLTDAD (272 aa). Catalysis depends on charge relay system residues D180, H213, and S363. Positions 423 to 442 are disordered; the sequence is DCGGPDPTPDPEGKLTSGVP.

Belongs to the peptidase S8 family.

This Vibrio alginolyticus protein is Alkaline serine exoprotease A (proA).